Reading from the N-terminus, the 135-residue chain is Large ribosomal subunit protein bL19 (135 aa).

Belongs to the bacterial ribosomal protein bL19 family.

Its function is as follows. This protein is located at the 30S-50S ribosomal subunit interface and may play a role in the structure and function of the aminoacyl-tRNA binding site. This chain is Large ribosomal subunit protein bL19, found in Protochlamydia amoebophila (strain UWE25).